A 218-amino-acid chain; its full sequence is 1-Cys peroxiredoxin PER1 (218 aa).

The Thioredoxin domain maps to 4 to 164 (LTIGDTVPNL…VVRAVDSLLT (161 aa)). C46 functions as the Cysteine sulfenic acid (-SOH) intermediate in the catalytic mechanism. The short motif at 194-217 (KKMFPQGFETADLPSKKGYLRFTK) is the Bipartite nuclear localization signal element.

Belongs to the peroxiredoxin family. Prx6 subfamily. Embryo and aleurone cells.

The protein localises to the nucleus. Its subcellular location is the cytoplasm. The enzyme catalyses a hydroperoxide + [thioredoxin]-dithiol = an alcohol + [thioredoxin]-disulfide + H2O. Functionally, thiol-specific peroxidase that catalyzes the reduction of hydrogen peroxide and organic hydroperoxides to water and alcohols, respectively. Seems to contribute to the inhibition of germination during stress. The chain is 1-Cys peroxiredoxin PER1 (PER1) from Hordeum vulgare (Barley).